A 208-amino-acid chain; its full sequence is FMN-dependent NADH:quinone oxidoreductase (208 aa).

FMN-binding positions include Ser9, 15-17 (SVS), 96-99 (MYNF), and 140-143 (TRGG).

It belongs to the azoreductase type 1 family. Homodimer. The cofactor is FMN.

It carries out the reaction 2 a quinone + NADH + H(+) = 2 a 1,4-benzosemiquinone + NAD(+). The enzyme catalyses N,N-dimethyl-1,4-phenylenediamine + anthranilate + 2 NAD(+) = 2-(4-dimethylaminophenyl)diazenylbenzoate + 2 NADH + 2 H(+). Its function is as follows. Quinone reductase that provides resistance to thiol-specific stress caused by electrophilic quinones. Also exhibits azoreductase activity. Catalyzes the reductive cleavage of the azo bond in aromatic azo compounds to the corresponding amines. The chain is FMN-dependent NADH:quinone oxidoreductase from Azospirillum brasilense.